Consider the following 296-residue polypeptide: 4-diphosphocytidyl-2-C-methyl-D-erythritol kinase (296 aa).

Lysine 19 is an active-site residue. Residue 102–112 (PMGAGLGGGSS) coordinates ATP. Aspartate 144 is an active-site residue.

This sequence belongs to the GHMP kinase family. IspE subfamily.

It carries out the reaction 4-CDP-2-C-methyl-D-erythritol + ATP = 4-CDP-2-C-methyl-D-erythritol 2-phosphate + ADP + H(+). It functions in the pathway isoprenoid biosynthesis; isopentenyl diphosphate biosynthesis via DXP pathway; isopentenyl diphosphate from 1-deoxy-D-xylulose 5-phosphate: step 3/6. In terms of biological role, catalyzes the phosphorylation of the position 2 hydroxy group of 4-diphosphocytidyl-2C-methyl-D-erythritol. This Burkholderia pseudomallei (strain 1710b) protein is 4-diphosphocytidyl-2-C-methyl-D-erythritol kinase.